The sequence spans 261 residues: uncharacterized protein (261 aa).

A compositionally biased stretch (polar residues) spans 1–12; it reads MSRTSSQNQEII. The tract at residues 1 to 139 is disordered; that stretch reads MSRTSSQNQE…KELDTINKKT (139 aa). Residues 23–55 are compositionally biased toward low complexity; that stretch reads SSKPSKSSKPSKSSKPSKSSKTSKSSRSSGSKS. Residues 65 to 74 show a composition bias toward basic and acidic residues; the sequence is SRKDKYKEEY. The segment covering 79–108 has biased composition (acidic residues); the sequence is YPDEQEYEQEYEQEYEQEYQDNGEQTEEFV. Basic and acidic residues predominate over residues 122–139; sequence DERQTQSNKELDTINKKT. 2 coiled-coil regions span residues 151 to 181 and 218 to 243; these read MDHD…IIKL and EDII…KKIE.

This is an uncharacterized protein from Acanthamoeba polyphaga (Amoeba).